The following is a 282-amino-acid chain: Secretory carrier-associated membrane protein 1 (282 aa).

Residues Met-1–Asp-49 form a disordered region. The Cytoplasmic portion of the chain corresponds to Met-1–Gln-117. Positions Ala-18–Leu-30 are enriched in polar residues. A Phosphoserine modification is found at Ser-31. Positions Leu-48–Asn-93 form a coiled coil. A run of 4 helical transmembrane segments spans residues Tyr-118–Val-138, Ile-150–Tyr-170, Phe-185–Ala-205, and Ile-233–Ile-253. Over Gln-254–Leu-282 the chain is Cytoplasmic.

This sequence belongs to the SCAMP family.

The protein resides in the cell membrane. It localises to the cytoplasmic vesicle. Its subcellular location is the secretory vesicle membrane. Probably involved in membrane trafficking. In Arabidopsis thaliana (Mouse-ear cress), this protein is Secretory carrier-associated membrane protein 1 (SCAMP1).